A 132-amino-acid polypeptide reads, in one-letter code: Small ribosomal subunit protein uS8 (132 aa).

The protein belongs to the universal ribosomal protein uS8 family. As to quaternary structure, part of the 30S ribosomal subunit. Contacts proteins S5 and S12.

Functionally, one of the primary rRNA binding proteins, it binds directly to 16S rRNA central domain where it helps coordinate assembly of the platform of the 30S subunit. The sequence is that of Small ribosomal subunit protein uS8 from Kocuria rhizophila (strain ATCC 9341 / DSM 348 / NBRC 103217 / DC2201).